The sequence spans 163 residues: RNA pyrophosphohydrolase (163 aa).

The Nudix hydrolase domain maps to 6 to 149 (GYRLNVGIVI…KRDVYRQVMK (144 aa)). Residues 38–59 (GGIHLTESPEEAMYRELFEELG) carry the Nudix box motif.

The protein belongs to the Nudix hydrolase family. RppH subfamily. It depends on a divalent metal cation as a cofactor.

Accelerates the degradation of transcripts by removing pyrophosphate from the 5'-end of triphosphorylated RNA, leading to a more labile monophosphorylated state that can stimulate subsequent ribonuclease cleavage. The polypeptide is RNA pyrophosphohydrolase (Hamiltonella defensa subsp. Acyrthosiphon pisum (strain 5AT)).